We begin with the raw amino-acid sequence, 101 residues long: Large ribosomal subunit protein uL24 (101 aa).

The protein belongs to the universal ribosomal protein uL24 family. Part of the 50S ribosomal subunit.

Its function is as follows. One of two assembly initiator proteins, it binds directly to the 5'-end of the 23S rRNA, where it nucleates assembly of the 50S subunit. Functionally, one of the proteins that surrounds the polypeptide exit tunnel on the outside of the subunit. This is Large ribosomal subunit protein uL24 from Borrelia turicatae (strain 91E135).